The primary structure comprises 560 residues: Eukaryotic translation initiation factor 3 subunit D-1 (560 aa).

Residues Val-98 to Ser-166 are disordered. A compositionally biased stretch (basic residues) spans Lys-100–Asn-121. At Thr-128 the chain carries Phosphothreonine. Over residues Gly-147–His-156 the composition is skewed to basic residues. The segment at Glu-291 to Pro-305 is RNA gate.

This sequence belongs to the eIF-3 subunit D family. Component of the eukaryotic translation initiation factor 3 (eIF-3) complex. The eIF-3 complex interacts with pix.

It is found in the cytoplasm. Its function is as follows. mRNA cap-binding component of the eukaryotic translation initiation factor 3 (eIF-3) complex, which is involved in protein synthesis of a specialized repertoire of mRNAs and, together with other initiation factors, stimulates binding of mRNA and methionyl-tRNAi to the 40S ribosome. The eIF-3 complex specifically targets and initiates translation of a subset of mRNAs involved in cell proliferation. In the eIF-3 complex, eif3d specifically recognizes and binds the 7-methylguanosine cap of a subset of mRNAs. The sequence is that of Eukaryotic translation initiation factor 3 subunit D-1 from Drosophila simulans (Fruit fly).